The sequence spans 198 residues: Prolactin (198 aa).

Intrachain disulfides connect cysteine 4–cysteine 11, cysteine 58–cysteine 173, and cysteine 190–cysteine 198.

Belongs to the somatotropin/prolactin family. Pituitary gland.

The protein resides in the secreted. The protein is Prolactin of Chelonia mydas (Green sea-turtle).